Consider the following 333-residue polypeptide: tRNA-modifying protein YgfZ (333 aa).

Folate is bound by residues Trp33 and Trp195.

The protein belongs to the tRNA-modifying YgfZ family.

It is found in the cytoplasm. Functionally, folate-binding protein involved in regulating the level of ATP-DnaA and in the modification of some tRNAs. It is probably a key factor in regulatory networks that act via tRNA modification, such as initiation of chromosomal replication. In Pectobacterium carotovorum subsp. carotovorum (strain PC1), this protein is tRNA-modifying protein YgfZ.